The sequence spans 1155 residues: MAASRIASANALGPNRVSFARIKEPLEVPNLLALQTESFDWLLGNERWRARVEAARKAGRKDIPEQSGLEEIFEEISPIEDFSGTMSLSFRDHRFEPPKYSEEECKDKDMTYSAPMFVTAEFINNDTGEIKSQTVFMGDFPLMTAKGTFIINGTERVVVSQLVRSPGVYFDSQMDKSSDKELYGCKIIPSRGAWLEFEIDKRDFVGVRIDRKRKQAVTILLKALGWTTDQILERFGEYESIRATLEKDPTAGTDDALLDIYRKLRPGEPPTKEAAQALLENLYFNPKRYDLAKVGRYKINKKLGLEIDITQGTLTEEDIVATVDYLVRLHAGEKELVRPHGTFPIEVDDIDHFGNRRLRTVGELIQNQVRLGLARMERVVRERMTTQDVEAITPQTLINIRPVVASIREFFGTSQLSQFMDQTNPLAGLTHKRRLSALGPGGLSRERAGFEVRDVHPSHYGRMCPIETPEGPNIGLIGSLAAYARVNSFGFIETPYRKVVDGRITDEVVYLTADEEDRYVIAQANTPVNPDGTFAESQVLARRKGGEFESVAAEEVHYMDISPRQMVSVATAMIPFLEHDDANRALMGSNMQRQAVPLLRAEAPLVGTGMEYRAATDAGDVILAEKSGVVEDVTADYITVLADDGTRKTYRVHKFRRTNQGTCFNQRPIVEEGQRVEEGQVLADGPSTEAGEMALGKNLLVAYMSWEGHNYEDAIVLSQRLVEEDILSSIHIEEHEVDARETKLGPEEITREIPNVSEEVLADLDERGIIRIGAEVVDGDILVGKVTPKGETELTPEERLLRAIFGEKAREVRDTSLKVPHGESGKVIGVRVFSREEGDELPPGVNELVRVYVAQKRKITDGDKLAGRHGNKGVIAKILPKEDMPFLEDGTPVDIVLNPLGVPGRMNIGQIMEMHLGWLAKHGWKVEGDDAEWKRRLRDIGAHEAPPNSKVATPVFDGAREDEISGLLSCVLPDQDGDILVNKFGKAKLYDGRTGEPFKEPVAVGYAYFLKLHHLVDDKIHARSTGPYSMITQQPLGGKAQFGGQRFGEMEVWALEAYGAAYALQELLTIKSDDINGRVKVYEAIVKGENIPEPGIPESFKVLIKEMQSLCLNVEVLSRDGMSIEMRDSEEDVFRAAEELGIDLGRREPSSVEEV.

This sequence belongs to the RNA polymerase beta chain family. In terms of assembly, the RNAP catalytic core consists of 2 alpha, 1 beta, 1 beta' and 1 omega subunit. When a sigma factor is associated with the core the holoenzyme is formed, which can initiate transcription.

The enzyme catalyses RNA(n) + a ribonucleoside 5'-triphosphate = RNA(n+1) + diphosphate. Functionally, DNA-dependent RNA polymerase catalyzes the transcription of DNA into RNA using the four ribonucleoside triphosphates as substrates. This is DNA-directed RNA polymerase subunit beta from Thermobifida fusca (strain YX).